The sequence spans 424 residues: MSPNSKGVEILSIGTELLLGNITNTNAQWISEQLSQLGLNHFRQSTVGDNRDRIIKVIQEISQRSNLLITTGGLGPTPDDLTTEAIATSFNVSLFERPHLWDEIKQKTSNSKLQDNSSSLRKQCFFPKNAQIINNPRGTAPGMIWEPIKGFTILTFPGVPSEMKTMWKETAFDFIKTKFSDSYSFFSKTLKFSGIGESSVAEKINDLLNLKNPTVAPYANLGEVKLRITARAKNEVEAKNIIKPVKEKLKKKFPKFIFGEDNDTLPSVLIKELAKRNETIVFAESCTGGLLSSSITSISGSSQVFQGSIVSYSNELKNSLLNISEDNLKKYGAVSEEVCEAMAINIKNRLGADWAIGVSGIAGPNGGSQEKPVGLVYISIAGPNNHITNIKKKYNSTRNRIEIQTLSVNVCLNSLRLILLSNSK.

Belongs to the CinA family.

This is CinA-like protein from Prochlorococcus marinus (strain MIT 9215).